Here is a 143-residue protein sequence, read N- to C-terminus: Large ribosomal subunit protein bL17 (143 aa).

A compositionally biased stretch (basic and acidic residues) spans G124–A133. The segment at G124 to A143 is disordered.

Belongs to the bacterial ribosomal protein bL17 family. Part of the 50S ribosomal subunit. Contacts protein L32.

The protein is Large ribosomal subunit protein bL17 of Mesorhizobium japonicum (strain LMG 29417 / CECT 9101 / MAFF 303099) (Mesorhizobium loti (strain MAFF 303099)).